The following is a 237-amino-acid chain: Ribosomal RNA small subunit methyltransferase G (237 aa).

S-adenosyl-L-methionine is bound by residues glycine 78, phenylalanine 83, 129–130 (AE), and arginine 148.

The protein belongs to the methyltransferase superfamily. RNA methyltransferase RsmG family.

It localises to the cytoplasm. Specifically methylates the N7 position of a guanine in 16S rRNA. The sequence is that of Ribosomal RNA small subunit methyltransferase G from Streptococcus pyogenes serotype M6 (strain ATCC BAA-946 / MGAS10394).